The following is a 409-amino-acid chain: Glutamyl-tRNA(Gln) amidotransferase subunit D (409 aa).

Residues 68 to 390 (RKISVLATGG…DLFRDLFRKN (323 aa)) form the Asparaginase/glutaminase domain. Catalysis depends on residues Thr78, Thr152, Asp153, and Lys230.

The protein belongs to the asparaginase 1 family. GatD subfamily. As to quaternary structure, heterodimer of GatD and GatE.

The catalysed reaction is L-glutamyl-tRNA(Gln) + L-glutamine + ATP + H2O = L-glutaminyl-tRNA(Gln) + L-glutamate + ADP + phosphate + H(+). Its function is as follows. Allows the formation of correctly charged Gln-tRNA(Gln) through the transamidation of misacylated Glu-tRNA(Gln) in organisms which lack glutaminyl-tRNA synthetase. The reaction takes place in the presence of glutamine and ATP through an activated gamma-phospho-Glu-tRNA(Gln). The GatDE system is specific for glutamate and does not act on aspartate. This Thermoplasma acidophilum (strain ATCC 25905 / DSM 1728 / JCM 9062 / NBRC 15155 / AMRC-C165) protein is Glutamyl-tRNA(Gln) amidotransferase subunit D.